The chain runs to 119 residues: uncharacterized protein (119 aa).

Residues 1–112 (MVFNMRSTRG…FISSCLLLVL (112 aa)) form the ABC transmembrane type-1 domain. 2 helical membrane passes run 51 to 73 (VLAWSRAIGEFGATLMLAGATRF) and 91 to 111 (FEIAIGASLWLLFISSCLLLV).

It belongs to the binding-protein-dependent transport system permease family. CysTW subfamily.

The protein localises to the cell membrane. This is an uncharacterized protein from Haemophilus influenzae (strain ATCC 51907 / DSM 11121 / KW20 / Rd).